Reading from the N-terminus, the 301-residue chain is Glutathione transport system permease protein GsiD (301 aa).

Helical transmembrane passes span 37 to 57 (VAVA…WAQY), 103 to 123 (LAAG…LGLL), 141 to 161 (VLFA…MGSG), 162 to 182 (MANV…RLVR), 220 to 240 (IVVF…SLSF), and 264 to 284 (VIAP…VLAF). Residues 99-288 (TRISLAAGIF…LTVLAFNLLG (190 aa)) enclose the ABC transmembrane type-1 domain.

Belongs to the binding-protein-dependent transport system permease family. In terms of assembly, the complex is composed of two ATP-binding proteins (GsiA), two transmembrane proteins (GsiC and GsiD) and a solute-binding protein (GsiB).

It is found in the cell inner membrane. Its function is as follows. Part of the ABC transporter complex GsiABCD involved in glutathione import. Probably responsible for the translocation of the substrate across the membrane. The chain is Glutathione transport system permease protein GsiD from Pectobacterium atrosepticum (strain SCRI 1043 / ATCC BAA-672) (Erwinia carotovora subsp. atroseptica).